The chain runs to 51 residues: Large ribosomal subunit protein bL33 (51 aa).

This sequence belongs to the bacterial ribosomal protein bL33 family.

The protein is Large ribosomal subunit protein bL33 of Acidithiobacillus ferrooxidans (strain ATCC 53993 / BNL-5-31) (Leptospirillum ferrooxidans (ATCC 53993)).